A 237-amino-acid polypeptide reads, in one-letter code: Zinc finger protein 22 (237 aa).

The segment at 1–33 is disordered; the sequence is MRLGKPKGGISRSASQGKTYESKRKTARQRQKW. N6-acetyllysine is present on residues Lys18 and Lys23. C2H2-type zinc fingers lie at residues 55 to 82, 83 to 110, 111 to 138, 139 to 166, and 167 to 194; these read YKCT…GKKS, HKCA…GEKP, YKCD…GEKP, YCCD…GEKP, and YQCE…EKKS. Residues 188–217 are compositionally biased toward basic residues; sequence VHKEKKSHKRGKNARAKTHPVSWKRGKGRK. The tract at residues 188-218 is disordered; sequence VHKEKKSHKRGKNARAKTHPVSWKRGKGRKA.

The protein belongs to the krueppel C2H2-type zinc-finger protein family. Highly expressed in the ameloblast layer of mandibular incisors, moderately expressed in submandibular gland, calvaria, kidney and lung, and expressed at low levels in brain and thymus.

The protein resides in the nucleus. Functionally, binds DNA through the consensus sequence 5'-CAATG-3'. May be involved in transcriptional regulation and may play a role in tooth formation. The sequence is that of Zinc finger protein 22 (Znf22) from Rattus norvegicus (Rat).